The primary structure comprises 567 residues: Dihydrolipoyllysine-residue acetyltransferase component of pyruvate dehydrogenase complex (567 aa).

2 consecutive Lipoyl-binding domains span residues 2–75 and 108–181; these read SKQI…LVLE and IVEV…MRFE. K41 and K147 each carry N6-lipoyllysine. Over residues 192-238 the composition is skewed to low complexity; that stretch reads SAPASTSAPQTAAPATTAQAPQAAAPDTTAQAPQAAAPDTTAQAAQS. The disordered stretch occupies residues 192 to 249; sequence SAPASTSAPQTAAPATTAQAPQAAAPDTTAQAPQAAAPDTTAQAAQSNNNVSGLSQEQ. Polar residues predominate over residues 239-249; sequence NNNVSGLSQEQ. One can recognise a Peripheral subunit-binding (PSBD) domain in the interval 258–295; that stretch reads HATPVIRRLAREFGVNLDKVKGTGRKGRIVKEDIEAYV. Catalysis depends on residues C484, H540, and D544.

Belongs to the 2-oxoacid dehydrogenase family. Forms a 24-polypeptide structural core with octahedral symmetry. Requires (R)-lipoate as cofactor.

It carries out the reaction N(6)-[(R)-dihydrolipoyl]-L-lysyl-[protein] + acetyl-CoA = N(6)-[(R)-S(8)-acetyldihydrolipoyl]-L-lysyl-[protein] + CoA. The pyruvate dehydrogenase complex catalyzes the overall conversion of pyruvate to acetyl-CoA and CO(2). It contains multiple copies of three enzymatic components: pyruvate dehydrogenase (E1), dihydrolipoamide acetyltransferase (E2) and lipoamide dehydrogenase (E3). The chain is Dihydrolipoyllysine-residue acetyltransferase component of pyruvate dehydrogenase complex (aceF) from Haemophilus influenzae (strain ATCC 51907 / DSM 11121 / KW20 / Rd).